A 468-amino-acid chain; its full sequence is Malate-2H(+)/Na(+)-lactate antiporter (468 aa).

Helical transmembrane passes span 9–29 (LFEIIIVLGVFLALVLSFTVF), 30–50 (LDLPIQLALFVSWFIAMLLGI), 73–93 (AVLILVSVGALIGTWIAGGVV), 96–116 (LIYYGLEFIHPSIFLLATLII), 136–156 (IAMIAIGEGLGIPLPLVAGAI), 192–212 (LYLSIPAYVITAILFTVVGFM), 233–253 (TFDIHIWMLIPAVLVIVLLAM), 258–278 (MPVIVIGALLGAIWAVVFQGM), 309–329 (IVGMLDSLVVIIFGLGFGGLL), 357–377 (LIVAFLANIFGCAMYVSLILT), 405–425 (LTSGMVPWSDNGIYMAGILGV), and 428–448 (FSYLPFMWLSFVAIGLAIIYG).

The protein belongs to the NhaC Na(+)/H(+) (TC 2.A.35) antiporter family.

It is found in the cell membrane. Functionally, couples proton uptake and Na(+) efflux to the substrate-product malate/lactate antiport, in an electroneutral malate-2H(+)/Na(+)-lactate exchange. Plays a role in supporting growth to high density on malate at reduced protonmotive force. In Bacillus subtilis (strain 168), this protein is Malate-2H(+)/Na(+)-lactate antiporter (mleN).